We begin with the raw amino-acid sequence, 228 residues long: 2-C-methyl-D-erythritol 4-phosphate cytidylyltransferase (228 aa).

This sequence belongs to the IspD/TarI cytidylyltransferase family. IspD subfamily.

The enzyme catalyses 2-C-methyl-D-erythritol 4-phosphate + CTP + H(+) = 4-CDP-2-C-methyl-D-erythritol + diphosphate. It participates in isoprenoid biosynthesis; isopentenyl diphosphate biosynthesis via DXP pathway; isopentenyl diphosphate from 1-deoxy-D-xylulose 5-phosphate: step 2/6. Functionally, catalyzes the formation of 4-diphosphocytidyl-2-C-methyl-D-erythritol from CTP and 2-C-methyl-D-erythritol 4-phosphate (MEP). This Halalkalibacterium halodurans (strain ATCC BAA-125 / DSM 18197 / FERM 7344 / JCM 9153 / C-125) (Bacillus halodurans) protein is 2-C-methyl-D-erythritol 4-phosphate cytidylyltransferase.